Here is a 78-residue protein sequence, read N- to C-terminus: Translational regulator CsrA (78 aa).

Belongs to the CsrA/RsmA family. Homodimer; the beta-strands of each monomer intercalate to form a hydrophobic core, while the alpha-helices form wings that extend away from the core.

The protein resides in the cytoplasm. A translational regulator that binds mRNA to regulate translation initiation and/or mRNA stability. Usually binds in the 5'-UTR at or near the Shine-Dalgarno sequence preventing ribosome-binding, thus repressing translation. Its main target seems to be the major flagellin gene, while its function is anatagonized by FliW. The chain is Translational regulator CsrA from Oleidesulfovibrio alaskensis (strain ATCC BAA-1058 / DSM 17464 / G20) (Desulfovibrio alaskensis).